Consider the following 402-residue polypeptide: AA9 family lytic polysaccharide monooxygenase E (402 aa).

The first 16 residues, 1 to 16 (MSRLVSFASLLAAVNA), serve as a signal peptide directing secretion. H17 is a binding site for Cu(2+). 2 disulfide bridges follow: C72-C194 and C113-C117. A glycan (N-linked (GlcNAc...) asparagine) is linked at N75. H102 lines the Cu(2+) pocket. N-linked (GlcNAc...) asparagine glycosylation is present at N154. H180 and Q189 together coordinate O2. Y191 provides a ligand contact to Cu(2+). Positions 364 to 400 (GSNPLYAQCGGLNFKGASGCVAGATCKKMNPYYSQCV) constitute a CBM1 domain.

It belongs to the polysaccharide monooxygenase AA9 family. Requires Cu(2+) as cofactor.

It localises to the secreted. It carries out the reaction [(1-&gt;4)-beta-D-glucosyl]n+m + reduced acceptor + O2 = 4-dehydro-beta-D-glucosyl-[(1-&gt;4)-beta-D-glucosyl]n-1 + [(1-&gt;4)-beta-D-glucosyl]m + acceptor + H2O.. In terms of biological role, lytic polysaccharide monooxygenase (LPMO) that depolymerizes crystalline and amorphous polysaccharides via the oxidation of scissile alpha- or beta-(1-4)-glycosidic bonds, yielding C1 or C4 oxidation products. Catalysis by LPMOs requires the reduction of the active-site copper from Cu(II) to Cu(I) by a reducing agent and H(2)O(2) or O(2) as a cosubstrate. The polypeptide is AA9 family lytic polysaccharide monooxygenase E (Emericella nidulans (strain FGSC A4 / ATCC 38163 / CBS 112.46 / NRRL 194 / M139) (Aspergillus nidulans)).